A 479-amino-acid chain; its full sequence is Ribosomal RNA small subunit methyltransferase F (479 aa).

S-adenosyl-L-methionine-binding positions include 125–131, Glu149, Asp176, and Asp194; that span reads AAAPGSK. Residue Cys247 is the Nucleophile of the active site.

It belongs to the class I-like SAM-binding methyltransferase superfamily. RsmB/NOP family.

Its subcellular location is the cytoplasm. It catalyses the reaction cytidine(1407) in 16S rRNA + S-adenosyl-L-methionine = 5-methylcytidine(1407) in 16S rRNA + S-adenosyl-L-homocysteine + H(+). In terms of biological role, specifically methylates the cytosine at position 1407 (m5C1407) of 16S rRNA. In Shigella dysenteriae serotype 1 (strain Sd197), this protein is Ribosomal RNA small subunit methyltransferase F.